The chain runs to 275 residues: MRSPLSDKSGSPEQSTRLEVEIETRDLSVYYGSHLAVKQVSLKIPKNHITAFIGPSGCGKSTILRCFNRMNDLIPGARVEGSVIFHGKNIYDPDVDPSEVRRRVGLVFQKPNPFPKSIYDNIAFGPRINGYQGDLDELVERALRQAVLWDEVKDKLRMSALSLSGGQQQRLCIARTLAIQPEVILMDEPCASLDPISTLRIEELLKELGRRYTIIIVTHNMQQAARVSDFTAFFNTELDERGIRYGRMVEFDRTEKIFNSPANRETEEYVSGRFG.

The region spanning 22–261 (IETRDLSVYY…DRTEKIFNSP (240 aa)) is the ABC transporter domain. 54 to 61 (GPSGCGKS) lines the ATP pocket.

The protein belongs to the ABC transporter superfamily. Phosphate importer (TC 3.A.1.7) family. In terms of assembly, the complex is composed of two ATP-binding proteins (PstB), two transmembrane proteins (PstC and PstA) and a solute-binding protein (PstS).

It is found in the cell inner membrane. The enzyme catalyses phosphate(out) + ATP + H2O = ADP + 2 phosphate(in) + H(+). Functionally, part of the ABC transporter complex PstSACB involved in phosphate import. Responsible for energy coupling to the transport system. In Synechococcus sp. (strain JA-3-3Ab) (Cyanobacteria bacterium Yellowstone A-Prime), this protein is Phosphate import ATP-binding protein PstB 1.